The sequence spans 716 residues: Fatty acid oxidation complex subunit alpha (716 aa).

The interval 1–189 (MIYQSPTIQV…KVGAIDAVVA (189 aa)) is enoyl-CoA hydratase/isomerase. Asp296 contacts substrate. Residues 311–716 (KDVNQAAVLG…AANNGSYYQA (406 aa)) are 3-hydroxyacyl-CoA dehydrogenase. NAD(+)-binding positions include Met324, Asp343, 400-402 (VVE), Lys407, and Ser429. Catalysis depends on His450, which acts as the For 3-hydroxyacyl-CoA dehydrogenase activity. Asn453 lines the NAD(+) pocket. Positions 500 and 660 each coordinate substrate.

It in the N-terminal section; belongs to the enoyl-CoA hydratase/isomerase family. In the C-terminal section; belongs to the 3-hydroxyacyl-CoA dehydrogenase family. As to quaternary structure, heterotetramer of two alpha chains (FadB) and two beta chains (FadA).

The catalysed reaction is a (3S)-3-hydroxyacyl-CoA + NAD(+) = a 3-oxoacyl-CoA + NADH + H(+). It carries out the reaction a (3S)-3-hydroxyacyl-CoA = a (2E)-enoyl-CoA + H2O. The enzyme catalyses a 4-saturated-(3S)-3-hydroxyacyl-CoA = a (3E)-enoyl-CoA + H2O. It catalyses the reaction (3S)-3-hydroxybutanoyl-CoA = (3R)-3-hydroxybutanoyl-CoA. The catalysed reaction is a (3Z)-enoyl-CoA = a 4-saturated (2E)-enoyl-CoA. It carries out the reaction a (3E)-enoyl-CoA = a 4-saturated (2E)-enoyl-CoA. The protein operates within lipid metabolism; fatty acid beta-oxidation. Involved in the aerobic and anaerobic degradation of long-chain fatty acids via beta-oxidation cycle. Catalyzes the formation of 3-oxoacyl-CoA from enoyl-CoA via L-3-hydroxyacyl-CoA. It can also use D-3-hydroxyacyl-CoA and cis-3-enoyl-CoA as substrate. The protein is Fatty acid oxidation complex subunit alpha of Shewanella frigidimarina (strain NCIMB 400).